Consider the following 213-residue polypeptide: Thymidylate kinase (213 aa).

Position 11 to 18 (11 to 18 (GPEGAGKT)) interacts with ATP.

It belongs to the thymidylate kinase family.

The enzyme catalyses dTMP + ATP = dTDP + ADP. Functionally, phosphorylation of dTMP to form dTDP in both de novo and salvage pathways of dTTP synthesis. The chain is Thymidylate kinase from Leuconostoc mesenteroides subsp. mesenteroides (strain ATCC 8293 / DSM 20343 / BCRC 11652 / CCM 1803 / JCM 6124 / NCDO 523 / NBRC 100496 / NCIMB 8023 / NCTC 12954 / NRRL B-1118 / 37Y).